An 83-amino-acid polypeptide reads, in one-letter code: MSGNTGERPFADIITSIRYWVIHSITIPSLFIAGWLFVSTGLAYDVFGTPRPNEYFTENRQEVPLITDRFNSLEQIESYTKSI.

Residues 21–35 (VIHSITIPSLFIAGW) form a helical membrane-spanning segment. His23 serves as a coordination point for heme.

Belongs to the PsbE/PsbF family. In terms of assembly, heterodimer of an alpha subunit and a beta subunit. PSII is composed of 1 copy each of membrane proteins PsbA, PsbB, PsbC, PsbD, PsbE, PsbF, PsbH, PsbI, PsbJ, PsbK, PsbL, PsbM, PsbT, PsbX, PsbY, PsbZ, Psb30/Ycf12, at least 3 peripheral proteins of the oxygen-evolving complex and a large number of cofactors. It forms dimeric complexes. Heme b is required as a cofactor.

It is found in the plastid. The protein resides in the chloroplast thylakoid membrane. In terms of biological role, this b-type cytochrome is tightly associated with the reaction center of photosystem II (PSII). PSII is a light-driven water:plastoquinone oxidoreductase that uses light energy to abstract electrons from H(2)O, generating O(2) and a proton gradient subsequently used for ATP formation. It consists of a core antenna complex that captures photons, and an electron transfer chain that converts photonic excitation into a charge separation. This Chara vulgaris (Common stonewort) protein is Cytochrome b559 subunit alpha.